A 286-amino-acid polypeptide reads, in one-letter code: Shikimate dehydrogenase (NADP(+)) (286 aa).

Shikimate-binding positions include 20 to 22 (SLS) and T67. The active-site Proton acceptor is the K71. Positions 92 and 107 each coordinate shikimate. NADP(+) is bound by residues 132-136 (GAGGA) and M228. Y230 provides a ligand contact to shikimate. Residue G251 coordinates NADP(+).

This sequence belongs to the shikimate dehydrogenase family. As to quaternary structure, homodimer.

It carries out the reaction shikimate + NADP(+) = 3-dehydroshikimate + NADPH + H(+). Its pathway is metabolic intermediate biosynthesis; chorismate biosynthesis; chorismate from D-erythrose 4-phosphate and phosphoenolpyruvate: step 4/7. Involved in the biosynthesis of the chorismate, which leads to the biosynthesis of aromatic amino acids. Catalyzes the reversible NADPH linked reduction of 3-dehydroshikimate (DHSA) to yield shikimate (SA). This Geobacter metallireducens (strain ATCC 53774 / DSM 7210 / GS-15) protein is Shikimate dehydrogenase (NADP(+)).